A 952-amino-acid chain; its full sequence is Glycine dehydrogenase (decarboxylating) (952 aa).

K703 is subject to N6-(pyridoxal phosphate)lysine.

Belongs to the GcvP family. As to quaternary structure, the glycine cleavage system is composed of four proteins: P, T, L and H. Pyridoxal 5'-phosphate is required as a cofactor.

It carries out the reaction N(6)-[(R)-lipoyl]-L-lysyl-[glycine-cleavage complex H protein] + glycine + H(+) = N(6)-[(R)-S(8)-aminomethyldihydrolipoyl]-L-lysyl-[glycine-cleavage complex H protein] + CO2. In terms of biological role, the glycine cleavage system catalyzes the degradation of glycine. The P protein binds the alpha-amino group of glycine through its pyridoxal phosphate cofactor; CO(2) is released and the remaining methylamine moiety is then transferred to the lipoamide cofactor of the H protein. The chain is Glycine dehydrogenase (decarboxylating) from Mycolicibacterium gilvum (strain PYR-GCK) (Mycobacterium gilvum (strain PYR-GCK)).